The following is a 187-amino-acid chain: UPF0301 protein lpl0620 (187 aa).

It belongs to the UPF0301 (AlgH) family.

The chain is UPF0301 protein lpl0620 from Legionella pneumophila (strain Lens).